Reading from the N-terminus, the 88-residue chain is Putative transmembrane protein ORF24 (88 aa).

3 consecutive transmembrane segments (helical) span residues 16 to 36 (LNMG…WAGM), 42 to 62 (AVFV…VTQF), and 64 to 84 (FIWF…VASI).

The protein localises to the host membrane. This Haloarcula hispanica (His1V) protein is Putative transmembrane protein ORF24.